A 370-amino-acid chain; its full sequence is Uroporphyrinogen decarboxylase (370 aa).

Residues 29–33, D79, Y155, S210, and H342 contribute to the substrate site; that span reads RQAGR.

Belongs to the uroporphyrinogen decarboxylase family. As to quaternary structure, homodimer.

Its subcellular location is the cytoplasm. The catalysed reaction is uroporphyrinogen III + 4 H(+) = coproporphyrinogen III + 4 CO2. Its pathway is porphyrin-containing compound metabolism; protoporphyrin-IX biosynthesis; coproporphyrinogen-III from 5-aminolevulinate: step 4/4. In terms of biological role, catalyzes the decarboxylation of four acetate groups of uroporphyrinogen-III to yield coproporphyrinogen-III. The chain is Uroporphyrinogen decarboxylase from Acidovorax sp. (strain JS42).